A 474-amino-acid polypeptide reads, in one-letter code: Methylenetetrahydrofolate--tRNA-(uracil-5-)-methyltransferase TrmFO (474 aa).

9 to 14 (GGGLAG) serves as a coordination point for FAD.

The protein belongs to the MnmG family. TrmFO subfamily. FAD serves as cofactor.

It is found in the cytoplasm. The catalysed reaction is uridine(54) in tRNA + (6R)-5,10-methylene-5,6,7,8-tetrahydrofolate + NADH + H(+) = 5-methyluridine(54) in tRNA + (6S)-5,6,7,8-tetrahydrofolate + NAD(+). It catalyses the reaction uridine(54) in tRNA + (6R)-5,10-methylene-5,6,7,8-tetrahydrofolate + NADPH + H(+) = 5-methyluridine(54) in tRNA + (6S)-5,6,7,8-tetrahydrofolate + NADP(+). Catalyzes the folate-dependent formation of 5-methyl-uridine at position 54 (M-5-U54) in all tRNAs. This chain is Methylenetetrahydrofolate--tRNA-(uracil-5-)-methyltransferase TrmFO, found in Methylorubrum extorquens (strain PA1) (Methylobacterium extorquens).